Reading from the N-terminus, the 197-residue chain is Xanthine phosphoribosyltransferase (197 aa).

Positions 20 and 27 each coordinate xanthine. 128-132 (ANGQA) serves as a coordination point for 5-phospho-alpha-D-ribose 1-diphosphate. Residue lysine 156 participates in xanthine binding.

Belongs to the purine/pyrimidine phosphoribosyltransferase family. Xpt subfamily. Homodimer.

The protein localises to the cytoplasm. The enzyme catalyses XMP + diphosphate = xanthine + 5-phospho-alpha-D-ribose 1-diphosphate. Its pathway is purine metabolism; XMP biosynthesis via salvage pathway; XMP from xanthine: step 1/1. Its function is as follows. Converts the preformed base xanthine, a product of nucleic acid breakdown, to xanthosine 5'-monophosphate (XMP), so it can be reused for RNA or DNA synthesis. The sequence is that of Xanthine phosphoribosyltransferase from Lactococcus lactis subsp. cremoris (strain MG1363).